The sequence spans 281 residues: Aliphatic sulfonates import ATP-binding protein SsuB (281 aa).

The ABC transporter domain maps to 40-263 (LDIRGLRKSF…QRGSAELAAL (224 aa)). 72-79 (GRSGCGKS) lines the ATP pocket.

This sequence belongs to the ABC transporter superfamily. Aliphatic sulfonates importer (TC 3.A.1.17.2) family. The complex is composed of two ATP-binding proteins (SsuB), two transmembrane proteins (SsuC) and a solute-binding protein (SsuA).

It is found in the cell inner membrane. The enzyme catalyses ATP + H2O + aliphatic sulfonate-[sulfonate-binding protein]Side 1 = ADP + phosphate + aliphatic sulfonateSide 2 + [sulfonate-binding protein]Side 1.. Its function is as follows. Part of the ABC transporter complex SsuABC involved in aliphatic sulfonates import. Responsible for energy coupling to the transport system. This Rhodopseudomonas palustris (strain ATCC BAA-98 / CGA009) protein is Aliphatic sulfonates import ATP-binding protein SsuB.